The sequence spans 261 residues: uncharacterized protein (261 aa).

Residues 1 to 22 (MRDSKRVVLYISIMVLSIFIIG) form the signal peptide. Cys-23 is lipidated: N-palmitoyl cysteine. Cys-23 carries S-diacylglycerol cysteine lipidation.

The protein belongs to the staphylococcal tandem lipoprotein family.

The protein resides in the cell membrane. This is an uncharacterized protein from Staphylococcus aureus (strain N315).